The following is a 611-amino-acid chain: Mitochondrial import receptor subunit TOM70 (611 aa).

Residue A2 is modified to N-acetylalanine. The Mitochondrial intermembrane portion of the chain corresponds to 2-41; sequence AASKPIEAAMAAAAAPGSGNGVGGGGGTAGPGSGAGTLPR. The chain crosses the membrane as a helical span at residues 42–62; it reads WHVALAIGAPLLLGAGAMYLW. The Cytoplasmic portion of the chain corresponds to 63–611; sequence SRRRRRREAG…KKYGLKPPTL (549 aa). The tract at residues 69-110 is disordered; the sequence is REAGGRGDASGLKRNSERKTPEGRASPALGSGHHDGSGDSLE. R74 is modified (omega-N-methylarginine). Phosphoserine is present on residues S94, S99, S105, S108, and S113. TPR repeat units lie at residues 117–150 and 156–189; these read AQAA…CPTE and STFY…NPKY. Position 188 is an N6-acetyllysine (K188). K278 is covalently cross-linked (Glycyl lysine isopeptide (Lys-Gly) (interchain with G-Cter in SUMO2)). 8 TPR repeats span residues 297 to 330, 332 to 365, 370 to 403, 404 to 437, 445 to 478, 479 to 512, 514 to 547, and 548 to 581; these read ENSG…QGKY, AEAL…KEAN, ANAL…DPMN, SDVY…RPKF, CFAL…FPRC, AEGY…EPDN, TTYV…DNKC, and DFAY…AKSE.

Belongs to the Tom70 family. As to quaternary structure, forms part of the preprotein translocase complex of the outer mitochondrial membrane (TOM complex) which consists of at least 7 different proteins (TOMM5, TOMM6, TOMM7, TOMM20, TOMM22, TOMM40 and TOMM70). Interacts with CAPN8. Interacts with TRADD, TRAF6 and STING. Interacts with MAVS. Interacts with HSPA8 and HSP90AA1; both interactions are required for preprotein mitochondrial import. The interaction with HSP90AA1 is direct and mediates the association of TOMM70 with IRF3 and TBK1. Upon mitochondrial depolarization, interacts with PINK1; the interaction is required for PINK1-TOM-TIM23 supercomplex formation which is critical for PINK1 stabilization at the outer mitochondrial membrane, kinase activation and downstream mitophagy. As to expression, expressed in the base region of the oxyntic and pyloric mucosae.

It localises to the mitochondrion outer membrane. Functionally, acts as a receptor of the preprotein translocase complex of the outer mitochondrial membrane (TOM complex). Recognizes and mediates the translocation of mitochondrial preproteins from the cytosol into the mitochondria in a chaperone dependent manner. Mediates TBK1 and IRF3 activation induced by MAVS in response to virus infection and promotes host antiviral responses during virus infection. In Mus musculus (Mouse), this protein is Mitochondrial import receptor subunit TOM70.